A 368-amino-acid polypeptide reads, in one-letter code: Protein Wnt-1 (368 aa).

The N-terminal stretch at 1 to 25 (MRGPALLLALRALCALSALRGTARA) is a signal peptide. 11 disulfide bridges follow: cysteine 91/cysteine 102, cysteine 141/cysteine 149, cysteine 151/cysteine 168, cysteine 216/cysteine 230, cysteine 218/cysteine 225, cysteine 297/cysteine 328, cysteine 313/cysteine 323, cysteine 327/cysteine 367, cysteine 343/cysteine 358, cysteine 345/cysteine 355, and cysteine 350/cysteine 351. Serine 222 carries the O-palmitoleoyl serine; by PORCN lipid modification.

It belongs to the Wnt family. In terms of assembly, forms a soluble 1:1 complex with AFM; this prevents oligomerization and is required for prolonged biological activity. The complex with AFM may represent the physiological form in body fluids. Interacts with PORCN. In terms of processing, N-glycosylated. N-glycosylation favors subsequent palmitoleoylation. Post-translationally, palmitoleoylation is required for efficient binding to frizzled receptors. Palmitoleoylation is necessary for proper trafficking to cell surface. Depalmitoleoylated by NOTUM, leading to inhibit Wnt signaling pathway.

It localises to the secreted. It is found in the extracellular space. The protein localises to the extracellular matrix. Ligand for members of the frizzled family of seven transmembrane receptors. Acts in the canonical Wnt signaling pathway by promoting beta-catenin-dependent transcriptional activation. Developmental protein that promotes cell proliferation in the developing spinal cord. Has a role in osteoblast function, bone development and bone homeostasis. The polypeptide is Protein Wnt-1 (WNT1) (Gallus gallus (Chicken)).